The primary structure comprises 269 residues: Auxin-responsive protein IAA26 (269 aa).

Residues 25 to 40 show a composition bias toward basic and acidic residues; sequence YQEDKNNTDQEKKLEL. 2 disordered regions span residues 25 to 55 and 76 to 146; these read YQED…HSAI and CFNG…KQVE. Positions 38–42 match the EAR-like (transcriptional repression) motif; it reads LELRL. 2 stretches are compositionally biased toward polar residues: residues 80–93 and 117–136; these read NHFS…SVPH and LAST…GQIN. Over residues 137-146 the composition is skewed to basic and acidic residues; it reads KSDDGEKQVE. Positions 151 to 250 constitute a PB1 domain; that stretch reads GMFVKINMDG…SVKRLRVIKS (100 aa).

Belongs to the Aux/IAA family. In terms of assembly, homodimers and heterodimers. Interacts with phytochrome A. Interacts with TPL.

It is found in the nucleus. Aux/IAA proteins are short-lived transcriptional factors that function as repressors of early auxin response genes at low auxin concentrations. Repression is thought to result from the interaction with auxin response factors (ARFs), proteins that bind to the auxin-responsive promoter element (AuxRE). Formation of heterodimers with ARF proteins may alter their ability to modulate early auxin response genes expression. This Arabidopsis thaliana (Mouse-ear cress) protein is Auxin-responsive protein IAA26 (IAA26).